The chain runs to 416 residues: Transcription factor PIL1 (416 aa).

Disordered regions lie at residues 1-24 (MEAKPLASSSSEPNMISPSSNIKP), 89-113 (VSQSKPQQDKETNEQMNNNKKKLKS), and 197-231 (ESTYLSNNSDDESDDAKTQVHARTRKPVTKRKRST). Positions 8-22 (SSSSEPNMISPSSNI) are enriched in low complexity. Residues 95–124 (QQDKETNEQMNNNKKKLKSSKIEFERNVSK) adopt a coiled-coil conformation. Residues 216–229 (VHARTRKPVTKRKR) are compositionally biased toward basic residues. Residues 229–278 (RSTEVHKLYERKRRDEFNKKMRALQDLLPNCYKDDKASLLDEAIKYMRTL) form the bHLH domain.

As to quaternary structure, homodimer. Interacts with APRR1/TOC1. Associates to PTAC12/HMR/PAP5 which acts as a transcriptional coactivator. In terms of tissue distribution, mainly expressed in stems, fruits and flowers and, to a lower extent, in leaves, seedlings and roots. Accumulates in etiolated seedlings.

It localises to the nucleus. Its function is as follows. Transcription factor. Involved in responses to transient and long-term shade. Required for the light-mediated inhibition of hypocotyl elongation. Necessary for rapid light-induced expression of the photomorphogenesis- and circadian-related gene APRR9. Seems to play a role in multiple PHYB responses, such as flowering transition and petiole elongation. The protein is Transcription factor PIL1 of Arabidopsis thaliana (Mouse-ear cress).